A 400-amino-acid polypeptide reads, in one-letter code: ATP-dependent rRNA helicase RRP3 (400 aa).

The short motif at 1–29 (MEFGDLRIDESLIKTCQEKGITRPTEVQR) is the Q motif element. In terms of domain architecture, Helicase ATP-binding spans 32–202 (IPAVLGGGDV…SSILKRPKTI (171 aa)). An ATP-binding site is contributed by 45–52 (SQTGSGKT). The DEAD box motif lies at 150–153 (DEAD). The Helicase C-terminal domain maps to 229-373 (ALVELLEMSQ…EFKMMKKNFG (145 aa)).

It belongs to the DEAD box helicase family. DDX47/RRP3 subfamily. Interacts with the SSU processome.

The protein localises to the nucleus. It catalyses the reaction ATP + H2O = ADP + phosphate + H(+). ATP-dependent rRNA helicase required for pre-ribosomal RNA processing. Involved in the maturation of the 35S-pre-rRNA and to its cleavage to mature 18S rRNA. This Encephalitozoon cuniculi (strain GB-M1) (Microsporidian parasite) protein is ATP-dependent rRNA helicase RRP3.